A 205-amino-acid chain; its full sequence is Small ribosomal subunit protein uS4 (205 aa).

Residues 18–46 form a disordered region; sequence NIWGRPKSPVNRREYGPGQHGQRRKGKLS. Residues 94-157 form the S4 RNA-binding domain; the sequence is RRLDTVVYRA…KQLAFVLEAS (64 aa).

It belongs to the universal ribosomal protein uS4 family. In terms of assembly, part of the 30S ribosomal subunit. Contacts protein S5. The interaction surface between S4 and S5 is involved in control of translational fidelity.

One of the primary rRNA binding proteins, it binds directly to 16S rRNA where it nucleates assembly of the body of the 30S subunit. Functionally, with S5 and S12 plays an important role in translational accuracy. The chain is Small ribosomal subunit protein uS4 from Rhodopseudomonas palustris (strain HaA2).